We begin with the raw amino-acid sequence, 245 residues long: tRNA1(Val) (adenine(37)-N6)-methyltransferase (245 aa).

It belongs to the methyltransferase superfamily. tRNA (adenine-N(6)-)-methyltransferase family.

Its subcellular location is the cytoplasm. It carries out the reaction adenosine(37) in tRNA1(Val) + S-adenosyl-L-methionine = N(6)-methyladenosine(37) in tRNA1(Val) + S-adenosyl-L-homocysteine + H(+). In terms of biological role, specifically methylates the adenine in position 37 of tRNA(1)(Val) (anticodon cmo5UAC). The protein is tRNA1(Val) (adenine(37)-N6)-methyltransferase of Escherichia coli (strain SE11).